The following is a 280-amino-acid chain: 2-dehydro-3-deoxyphosphooctonate aldolase 2 (280 aa).

This sequence belongs to the KdsA family.

It localises to the cytoplasm. The enzyme catalyses D-arabinose 5-phosphate + phosphoenolpyruvate + H2O = 3-deoxy-alpha-D-manno-2-octulosonate-8-phosphate + phosphate. It participates in carbohydrate biosynthesis; 3-deoxy-D-manno-octulosonate biosynthesis; 3-deoxy-D-manno-octulosonate from D-ribulose 5-phosphate: step 2/3. Its pathway is bacterial outer membrane biogenesis; lipopolysaccharide biosynthesis. The chain is 2-dehydro-3-deoxyphosphooctonate aldolase 2 (kdsA2) from Pseudomonas putida (strain ATCC 47054 / DSM 6125 / CFBP 8728 / NCIMB 11950 / KT2440).